The primary structure comprises 198 residues: dITP/XTP pyrophosphatase (198 aa).

Residue 9–14 (SNNAKK) participates in substrate binding. The Mg(2+) site is built by Asp-41 and Asp-70. Asp-70 serves as the catalytic Proton acceptor. Substrate is bound by residues Ser-71, 153-156 (FGYD), Lys-176, and 181-182 (HR).

Belongs to the HAM1 NTPase family. Homodimer. Mg(2+) is required as a cofactor.

It carries out the reaction XTP + H2O = XMP + diphosphate + H(+). The catalysed reaction is dITP + H2O = dIMP + diphosphate + H(+). The enzyme catalyses ITP + H2O = IMP + diphosphate + H(+). Its function is as follows. Pyrophosphatase that catalyzes the hydrolysis of nucleoside triphosphates to their monophosphate derivatives, with a high preference for the non-canonical purine nucleotides XTP (xanthosine triphosphate), dITP (deoxyinosine triphosphate) and ITP. Seems to function as a house-cleaning enzyme that removes non-canonical purine nucleotides from the nucleotide pool, thus preventing their incorporation into DNA/RNA and avoiding chromosomal lesions. In Aromatoleum aromaticum (strain DSM 19018 / LMG 30748 / EbN1) (Azoarcus sp. (strain EbN1)), this protein is dITP/XTP pyrophosphatase.